Consider the following 896-residue polypeptide: Chromatin assembly factor 1 subunit A-A (896 aa).

Disordered stretches follow at residues 1 to 23 (MPGK…KKMV), 185 to 377 (TSTS…EEEK), and 552 to 610 (DSDE…DPEN). Residues 10-21 (VMQSSTKSNTKK) show a composition bias toward polar residues. Residues 211–226 (ASVSSSSSPVSLSSPD) show a composition bias toward low complexity. Residues 227–236 (AQTGSQFRNR) are compositionally biased toward polar residues. The segment covering 237 to 246 (SSPSTSTTPT) has biased composition (low complexity). The span at 255–284 (SADKNKTKDKDKQRQAEKEERERAKKEARS) shows a compositional bias: basic and acidic residues. Residues 285–302 (AKKKKRQGLLKNLQRKRG) show a composition bias toward basic residues. Residues 308-377 (SGKEYKKEKK…EEKRLKEEEK (70 aa)) are compositionally biased toward basic and acidic residues. 3 stretches are compositionally biased toward acidic residues: residues 552–563 (DSDEEWEEEEPG), 572–586 (ENDD…DDDG), and 595–607 (SDDE…ECTD). The tract at residues 642 to 678 (CVWWDSKASEISLLQKFSACILESPAVDEELAQEISS) is necessary for homodimerization, competence for chromatin assembly. Residues 724–743 (SDAAGNESTSPNVTPQTPSN) are disordered. Residues 729-743 (NESTSPNVTPQTPSN) show a composition bias toward polar residues.

This sequence belongs to the CHAF1A family. Homodimer.

It is found in the nucleus. Its function is as follows. Involved in chromatin assembly in DNA replication and DNA repair. The protein is Chromatin assembly factor 1 subunit A-A (chaf1a-a) of Xenopus laevis (African clawed frog).